Here is a 383-residue protein sequence, read N- to C-terminus: Dual-specificity RNA methyltransferase RlmN (383 aa).

Glutamate 95 (proton acceptor) is an active-site residue. In terms of domain architecture, Radical SAM core spans 101 to 349; the sequence is EETRGTLCVS…TTVRKTRGDD (249 aa). Cysteine 108 and cysteine 354 form a disulfide bridge. [4Fe-4S] cluster contacts are provided by cysteine 115, cysteine 119, and cysteine 122. S-adenosyl-L-methionine-binding positions include 180 to 181, serine 212, 234 to 236, and asparagine 311; these read GE and SLH. Cysteine 354 (S-methylcysteine intermediate) is an active-site residue.

Belongs to the radical SAM superfamily. RlmN family. [4Fe-4S] cluster is required as a cofactor.

Its subcellular location is the cytoplasm. It carries out the reaction adenosine(2503) in 23S rRNA + 2 reduced [2Fe-2S]-[ferredoxin] + 2 S-adenosyl-L-methionine = 2-methyladenosine(2503) in 23S rRNA + 5'-deoxyadenosine + L-methionine + 2 oxidized [2Fe-2S]-[ferredoxin] + S-adenosyl-L-homocysteine. The catalysed reaction is adenosine(37) in tRNA + 2 reduced [2Fe-2S]-[ferredoxin] + 2 S-adenosyl-L-methionine = 2-methyladenosine(37) in tRNA + 5'-deoxyadenosine + L-methionine + 2 oxidized [2Fe-2S]-[ferredoxin] + S-adenosyl-L-homocysteine. Its function is as follows. Specifically methylates position 2 of adenine 2503 in 23S rRNA and position 2 of adenine 37 in tRNAs. m2A2503 modification seems to play a crucial role in the proofreading step occurring at the peptidyl transferase center and thus would serve to optimize ribosomal fidelity. This Paraburkholderia xenovorans (strain LB400) protein is Dual-specificity RNA methyltransferase RlmN.